A 365-amino-acid polypeptide reads, in one-letter code: DNA replication and repair protein RecF (365 aa).

30-37 (GANGQGKT) provides a ligand contact to ATP.

This sequence belongs to the RecF family.

The protein resides in the cytoplasm. In terms of biological role, the RecF protein is involved in DNA metabolism; it is required for DNA replication and normal SOS inducibility. RecF binds preferentially to single-stranded, linear DNA. It also seems to bind ATP. This Geobacter sulfurreducens (strain ATCC 51573 / DSM 12127 / PCA) protein is DNA replication and repair protein RecF.